The primary structure comprises 255 residues: Cathepsin G (255 aa).

Positions 1–18 (MQPLLLLLAFLLPTGAEA) are cleaved as a signal peptide. Positions 19 to 20 (GE) are cleaved as a propeptide — activation peptide. The tract at residues 21–25 (IIGGR) is important for antimicrobial activity. In terms of domain architecture, Peptidase S1 spans 21–243 (IIGGRESRPH…FLPWIRTTMR (223 aa)). C49 and C65 are joined by a disulfide. The active-site Charge relay system is the H64. N71 carries N-linked (GlcNAc...) (complex) asparagine; alternate glycosylation. N-linked (GlcNAc...) (paucimannose) asparagine; alternate glycosylation occurs at N71. The segment at 97 to 111 (HPQYNQRTIQNDIML) is important for antimicrobial activity. D108 functions as the Charge relay system in the catalytic mechanism. Cystine bridges form between C142–C207 and C172–C186. S201 serves as the catalytic Charge relay system. Residues 245 to 255 (FKLLDQMETPL) constitute a propeptide that is removed on maturation.

Belongs to the peptidase S1 family. As to quaternary structure, (Microbial infection) Interacts with CASP4; the interaction is promoted by the Td92 surface protein of the periodontal pathogen T.denticola and leads to CASP4 activation. (Microbial infection) Interacts with M.tuberculosis protein Rv3364c. In terms of assembly, (Microbial infection) Interacts with S.aureus EapH1; EapH1 acts as a reversible inhibitor of CATG activity. In terms of processing, two C-terminal truncation variants have been identified, one which ends at Arg-243 and one which ends at Ser-244. As to expression, expressed in neutrophils (at protein level). Expressed in B cells.

The protein localises to the cell membrane. The protein resides in the cytoplasmic granule. Its subcellular location is the secreted. It is found in the cytoplasm. It localises to the cytosol. The protein localises to the lysosome. The protein resides in the nucleus. It catalyses the reaction Specificity similar to chymotrypsin C.. With respect to regulation, inhibited by soybean trypsin inhibitor, benzamidine, the synthetic peptide R13K, Z-Gly-Leu-Phe-CH2Cl, phenylmethylsulfonyl fluoride, 3,4-dichloroisocoumarin, DFP, SBTI and alpha-1-antitrypsin. Inhibited by LPS from P.aeruginosa but not by LPS from S.minnesota. Not inhibited by elastinal, CMK, TLCK, ETDA or leupeptin. Its activity is regulated as follows. (Microbial infection) Inhibited reversibly by S.aureus EapH1. (Microbial infection) Activity is induced by the Td92 surface protein of the periodontal pathogen T.denticola. In terms of biological role, serine protease with trypsin- and chymotrypsin-like specificity. Also displays antibacterial activity against Gram-negative and Gram-positive bacteria independent of its protease activity. Prefers Phe and Tyr residues in the P1 position of substrates but also cleaves efficiently after Trp and Leu. Shows a preference for negatively charged amino acids in the P2' position and for aliphatic amino acids both upstream and downstream of the cleavage site. Required for recruitment and activation of platelets which is mediated by the F2RL3/PAR4 platelet receptor. Binds reversibly to and stimulates B cells and CD4(+) and CD8(+) T cells. Also binds reversibly to natural killer (NK) cells and enhances NK cell cytotoxicity through its protease activity. Cleaves complement C3. Cleaves vimentin. Cleaves thrombin receptor F2R/PAR1 and acts as either an agonist or an inhibitor, depending on the F2R cleavage site. Cleavage of F2R at '41-Arg-|-Ser-42' results in receptor activation while cleavage at '55-Phe-|-Trp-56' results in inhibition of receptor activation. Cleaves the synovial mucin-type protein PRG4/lubricin. Cleaves and activates IL36G which promotes expression of chemokines CXCL1 and CXLC8 in keratinocytes. Cleaves IL33 into mature forms which have greater activity than the unprocessed form. Cleaves coagulation factor F8 to produce a partially activated form. Also cleaves and activates coagulation factor F10. Cleaves leukocyte cell surface protein SPN/CD43 to release its extracellular domain and trigger its intramembrane proteolysis by gamma-secretase, releasing the CD43 cytoplasmic tail chain (CD43-ct) which translocates to the nucleus. Cleaves CCL5/RANTES to produce RANTES(4-68) lacking the N-terminal three amino acids which exhibits reduced chemotactic and antiviral activities. During apoptosis, cleaves SMARCA2/BRM to produce a 160 kDa cleavage product which localizes to the cytosol. Cleaves myelin basic protein MBP in B cell lysosomes at '224-Phe-|-Lys-225' and '248-Phe-|-Ser-249', degrading the major immunogenic MBP epitope and preventing the activation of MBP-specific autoreactive T cells. Cleaves annexin ANXA1 and antimicrobial peptide CAMP to produce peptides which act on neutrophil N-formyl peptide receptors to enhance the release of CXCL2. Acts as a ligand for the N-formyl peptide receptor FPR1, enhancing phagocyte chemotaxis. Has antibacterial activity against the Gram-negative bacteria N.gonorrhoeae and P.aeruginosa. Likely to act against N.gonorrhoeae by interacting with N.gonorrhoeae penA/PBP2. Exhibits potent antimicrobial activity against the Gram-positive bacterium L.monocytogenes. Has antibacterial activity against the Gram-positive bacterium S.aureus and degrades S.aureus biofilms, allowing polymorphonuclear leukocytes to penetrate the biofilm and phagocytose bacteria. Has antibacterial activity against M.tuberculosis. Mediates CASP4 activation induced by the Td92 surface protein of the periodontal pathogen T.denticola, causing production and secretion of IL1A and leading to pyroptosis of gingival fibroblasts. Induces platelet aggregation which is strongly potentiated in the presence of ELANE. This is Cathepsin G (CTSG) from Homo sapiens (Human).